Reading from the N-terminus, the 237-residue chain is B3 domain-containing protein At1g20600 (237 aa).

The tract at residues 53-79 is disordered; that stretch reads LVSQANQKQSRKREEKTEKNQPKRVKN. Residues 64–73 show a composition bias toward basic and acidic residues; sequence KREEKTEKNQ. Positions 126–230 form a DNA-binding region, TF-B3; the sequence is KKQLMSSDVD…LEHVFIRGSK (105 aa).

The protein localises to the nucleus. The chain is B3 domain-containing protein At1g20600 from Arabidopsis thaliana (Mouse-ear cress).